We begin with the raw amino-acid sequence, 291 residues long: 4-hydroxy-tetrahydrodipicolinate synthase (291 aa).

Residue Thr44 coordinates pyruvate. Catalysis depends on Tyr132, which acts as the Proton donor/acceptor. Lys160 serves as the catalytic Schiff-base intermediate with substrate. Val202 is a pyruvate binding site.

It belongs to the DapA family. In terms of assembly, homotetramer; dimer of dimers.

It localises to the cytoplasm. It catalyses the reaction L-aspartate 4-semialdehyde + pyruvate = (2S,4S)-4-hydroxy-2,3,4,5-tetrahydrodipicolinate + H2O + H(+). Its pathway is amino-acid biosynthesis; L-lysine biosynthesis via DAP pathway; (S)-tetrahydrodipicolinate from L-aspartate: step 3/4. Catalyzes the condensation of (S)-aspartate-beta-semialdehyde [(S)-ASA] and pyruvate to 4-hydroxy-tetrahydrodipicolinate (HTPA). The protein is 4-hydroxy-tetrahydrodipicolinate synthase of Clostridium perfringens (strain SM101 / Type A).